Here is a 331-residue protein sequence, read N- to C-terminus: PDZ and LIM domain protein 4 (331 aa).

Residues 1–84 form the PDZ domain; the sequence is MPHSVTLRGP…HLTLSVSRPE (84 aa). Disordered regions lie at residues 80 to 99, 105 to 152, and 221 to 243; these read VSRPEGRSWPSTPEDNKAQA, DSEA…GSNS, and AGEGGERPGPGGPRNLKPTASKL. Phosphoserine occurs at positions 112, 116, 120, and 135. The LIM zinc-binding domain maps to 254–313; the sequence is PECTRCGHGIVGTIVKARDKLYHPECFMCSDCGLNLKQRGYFFLDERLYCESHAKARVKP.

In terms of assembly, homodimer. Interacts (via C-terminus only or via combined C-terminus and LIM domain, but not LIM domain only) with PTPN13 (via the second or fourth PDZ domains). Found in a complex with PTPN13 and TRIP6. Interacts (via PDZ domain) with ACTN1 and ACTN2 (via C-terminal SDL residues). Interacts (via PDZ domain) with TRIP6 (via the second LIM domain or via the third LIM domain plus C-terminus). Interacts (via LIM domain) with GRIA1 (via C-terminus); this interaction as well as the interaction with alpha-actinin is required for their colocalization in early endosomes. Interacts with PDLIM1. Forms (via LIM domain) a heterodimer with PDLIM3. Interacts directly with SRC (via kinase domain and to a lesser extent the SH2 domain). Phosphorylated on tyrosine residue(s). Can be dephosphorylated by PTPN13.

The protein localises to the cytoplasm. Its subcellular location is the cytoskeleton. It is found in the cell projection. The protein resides in the dendritic spine. It localises to the early endosome membrane. The protein localises to the recycling endosome membrane. Its subcellular location is the nucleus. It is found in the perinuclear region. The protein resides in the lamellipodium. It localises to the synapse. The protein localises to the synaptosome. Suppresses SRC activation by recognizing and binding to active SRC and facilitating PTPN13-mediated dephosphorylation of SRC 'Tyr-419' leading to its inactivation. Inactivated SRC dissociates from this protein allowing the initiation of a new SRC inactivation cycle. Involved in reorganization of the actin cytoskeleton. In nonmuscle cells, binds to ACTN1 (alpha-actinin-1), increases the affinity of ACTN1 to F-actin (filamentous actin), and promotes formation of actin stress fibers. Involved in regulation of the synaptic AMPA receptor transport in dendritic spines of hippocampal pyramidal neurons directing the receptors toward an insertion at the postsynaptic membrane. Links endosomal surface-internalized GRIA1-containing AMPA receptors to the alpha-actinin/actin cytoskeleton. Increases AMPA receptor-mediated excitatory postsynaptic currents in neurons. This is PDZ and LIM domain protein 4 (PDLIM4) from Bos taurus (Bovine).